Reading from the N-terminus, the 279-residue chain is Small ribosomal subunit protein uS2 (279 aa).

A disordered region spans residues 232–279; it reads RRRGTDEKPEAGVASDEPLAEWERELLEEPKKSDEPKSDEQPAAAAAE. The segment covering 252–271 has biased composition (basic and acidic residues); sequence EWERELLEEPKKSDEPKSDE.

The protein belongs to the universal ribosomal protein uS2 family.

This chain is Small ribosomal subunit protein uS2, found in Salinispora arenicola (strain CNS-205).